A 631-amino-acid chain; its full sequence is 1-deoxy-D-xylulose-5-phosphate synthase (631 aa).

Thiamine diphosphate is bound by residues His-76 and Ala-117 to Ser-119. Asp-148 contributes to the Mg(2+) binding site. Thiamine diphosphate contacts are provided by residues Gly-149–Ala-150, Asn-177, Tyr-284, and Glu-365. Asn-177 lines the Mg(2+) pocket.

This sequence belongs to the transketolase family. DXPS subfamily. As to quaternary structure, homodimer. Requires Mg(2+) as cofactor. Thiamine diphosphate serves as cofactor.

It catalyses the reaction D-glyceraldehyde 3-phosphate + pyruvate + H(+) = 1-deoxy-D-xylulose 5-phosphate + CO2. Its pathway is metabolic intermediate biosynthesis; 1-deoxy-D-xylulose 5-phosphate biosynthesis; 1-deoxy-D-xylulose 5-phosphate from D-glyceraldehyde 3-phosphate and pyruvate: step 1/1. In terms of biological role, catalyzes the acyloin condensation reaction between C atoms 2 and 3 of pyruvate and glyceraldehyde 3-phosphate to yield 1-deoxy-D-xylulose-5-phosphate (DXP). The chain is 1-deoxy-D-xylulose-5-phosphate synthase from Methylibium petroleiphilum (strain ATCC BAA-1232 / LMG 22953 / PM1).